We begin with the raw amino-acid sequence, 518 residues long: MIPDVSQALAWLEKHPQALKGIQRGLERETLRVNADGTLATTGHPEALGSALTHKWITTDFAEALLEFITPVDGDIQHMLTFMRDLHRYTARKLGDERMWPLSMPCYIAEGQDIELAQYGTSNTGRFKTLYREGLKNRYGALMQTISGVHYNFSLPMAFWQAKCGVTEGDAAKEKISAGYFRLIRNYYRFGWVIPYLFGASPAICSSFLQGKPTTLPFEKTDCGMYYLPYATSLRLSDLGYTNKSQSNLGITFNDLHEYVAGLKRAIKTPSEEYVQIGLEKDGKRLQINSNVLQIENELYAPIRPKRVTRSGESPSDALLRGGIEYIEVRSLDINPFSPIGVDEQQVRFLDLFMVWCVLADAPEMSSSELLCTRANWNRVILEGRKPGLTLGIGCETAQFPLPKVGKDLFRDLRRVAQTLDSIHGGEDYQKVCDELVACFDNPELTFSARILRSMIDTGIGGTGKAFGEAYRNLLREEPLEILQEEEFIAERDASVRRQQEIEAADTEPFAAWLAKHD.

The protein belongs to the glutamate--cysteine ligase type 1 family. Type 1 subfamily.

It carries out the reaction L-cysteine + L-glutamate + ATP = gamma-L-glutamyl-L-cysteine + ADP + phosphate + H(+). Its pathway is sulfur metabolism; glutathione biosynthesis; glutathione from L-cysteine and L-glutamate: step 1/2. This chain is Glutamate--cysteine ligase, found in Salmonella arizonae (strain ATCC BAA-731 / CDC346-86 / RSK2980).